A 127-amino-acid chain; its full sequence is Small ribosomal subunit protein uS13 (127 aa).

The tract at residues 97–127 (PVRGQRTRTNARTRRGRRVTVAGKKKAPSKK) is disordered. The segment covering 101–127 (QRTRTNARTRRGRRVTVAGKKKAPSKK) has biased composition (basic residues).

The protein belongs to the universal ribosomal protein uS13 family. As to quaternary structure, part of the 30S ribosomal subunit. Forms a loose heterodimer with protein S19. Forms two bridges to the 50S subunit in the 70S ribosome.

In terms of biological role, located at the top of the head of the 30S subunit, it contacts several helices of the 16S rRNA. In the 70S ribosome it contacts the 23S rRNA (bridge B1a) and protein L5 of the 50S subunit (bridge B1b), connecting the 2 subunits; these bridges are implicated in subunit movement. Contacts the tRNAs in the A and P-sites. In Microcystis aeruginosa (strain NIES-843 / IAM M-2473), this protein is Small ribosomal subunit protein uS13.